The following is a 192-amino-acid chain: C-X-C chemokine receptor type 4 (192 aa).

Position 1 is a sulfotyrosine (Y1). The tract at residues 1–11 (YTEDDLGSGDY) is important for chemokine binding and signaling. Residues 1 to 28 (YTEDDLGSGDYDSMKEPCFREENAHFNR) lie on the Extracellular side of the membrane. A glycan (O-linked (Xyl...) (chondroitin sulfate) serine) is linked at S8. The residue at position 11 (Y11) is a Sulfotyrosine. The helical transmembrane segment at 29 to 53 (IFLPTVYSIIFLTGIVGNGLVILVM) threads the bilayer. Over 54-67 (GYQKKLRSMTDKYR) the chain is Cytoplasmic. Residues 68–89 (LHLSVADLLFVLTLPFWAVDAV) traverse the membrane as a helical segment. The tract at residues 84–87 (WAVD) is chemokine binding. The Extracellular segment spans residues 90 to 100 (ANWYFGQFLCK). The cysteines at positions 99 and 176 are disulfide-linked. Residues 101–120 (AVHVIYTVNLYSSVLILAFI) traverse the membrane as a helical segment. The interval 103-107 (HVIYT) is chemokine binding. At 121–144 (SLDRYLAIVHATNSQRPRKLLAEK) the chain is on the cytoplasmic side. An Important for signaling motif is present at residues 123–125 (DRY). The tract at residues 125–137 (YLAIVHATNSQRP) is involved in dimerization; when bound to chemokine. The helical transmembrane segment at 145-164 (VVYVGVWLPAVLLTIPDLIF) threads the bilayer. Residues 165 to 185 (ADIKEADERYICDRFYPSDLW) lie on the Extracellular side of the membrane. A chemokine binding, important for signaling region spans residues 176–180 (CDRFY). The chain crosses the membrane as a helical span at residues 186-192 (LVVFQFQ).

This sequence belongs to the G-protein coupled receptor 1 family. In terms of assembly, monomer. Can form homodimers. Interacts with CD164. Interacts with ARRB2; the interaction is dependent on the C-terminal phosphorylation of CXCR4 and allows activation of MAPK1 and MAPK3. Interacts with ARR3; the interaction is dependent on the C-terminal phosphorylation of CXCR4 and modulates calcium mobilization. Interacts with RNF113A; the interaction, enhanced by CXCL12, promotes CXCR4 ubiquitination and subsequent degradation. Interacts (via the cytoplasmic C-terminal) with ITCH (via the WW domains I and II); the interaction, enhanced by CXCL12, promotes CXCR4 ubiquitination and leads to its degradation. Interacts with extracellular ubiquitin. Interacts with DBN1; this interaction is enhanced by antigenic stimulation. Following LPS binding, may form a complex with GDF5, HSP90AA1 and HSPA8. In terms of processing, phosphorylated on agonist stimulation. Rapidly phosphorylated on serine and threonine residues in the C-terminal. Ubiquitinated after ligand binding, leading to its degradation. Ubiquitinated by ITCH at the cell membrane on agonist stimulation. The ubiquitin-dependent mechanism, endosomal sorting complex required for transport (ESCRT), then targets CXCR4 for lysosomal degradation. This process is dependent also on prior Ser-/Thr-phosphorylation in the C-terminal of CXCR4. Also binding of ARRB1 to STAM negatively regulates CXCR4 sorting to lysosomes though modulating ubiquitination of SFR5S. Post-translationally, sulfation is required for efficient binding of CXCL12/SDF-1alpha and promotes its dimerization. In terms of processing, O- and N-glycosylated. N-glycosylation can mask coreceptor function. The O-glycosylation chondroitin sulfate attachment does not affect interaction with CXCL12/SDF-1alpha nor its coreceptor activity.

The protein resides in the cell membrane. It localises to the cell junction. Its subcellular location is the early endosome. The protein localises to the late endosome. It is found in the lysosome. In terms of biological role, receptor for the C-X-C chemokine CXCL12/SDF-1 that transduces a signal by increasing intracellular calcium ion levels and enhancing MAPK1/MAPK3 activation. Involved in the AKT signaling cascade. Plays a role in regulation of cell migration, e.g. during wound healing. Acts as a receptor for extracellular ubiquitin; leading to enhanced intracellular calcium ions and reduced cellular cAMP levels. Binds bacterial lipopolysaccharide (LPS) et mediates LPS-induced inflammatory response, including TNF secretion by monocytes. Involved in hematopoiesis and in cardiac ventricular septum formation. Also plays an essential role in vascularization of the gastrointestinal tract, probably by regulating vascular branching and/or remodeling processes in endothelial cells. Involved in cerebellar development. In the CNS, could mediate hippocampal-neuron survival. This is C-X-C chemokine receptor type 4 (CXCR4) from Ovis aries (Sheep).